A 438-amino-acid chain; its full sequence is Enolase (438 aa).

Residues H159 and E168 each contribute to the substrate site. Catalysis depends on E211, which acts as the Proton donor. D246, E297, and D322 together coordinate Mg(2+). Substrate contacts are provided by E297 and D322. K347 (proton acceptor) is an active-site residue. Substrate contacts are provided by residues 374–377 and K398; that span reads SHRS.

Belongs to the enolase family. As to quaternary structure, homodimer. The cofactor is Mg(2+).

The protein resides in the cytoplasm. The catalysed reaction is (2R)-2-phosphoglycerate = phosphoenolpyruvate + H2O. Its pathway is carbohydrate degradation; glycolysis; pyruvate from D-glyceraldehyde 3-phosphate: step 4/5. The protein is Enolase (enoA) of Penicillium chrysogenum (Penicillium notatum).